Reading from the N-terminus, the 118-residue chain is Na(+)/H(+) antiporter subunit G1 (118 aa).

Transmembrane regions (helical) follow at residues 9–29 (VSII…TGLI), 47–67 (LGAM…EGYV), and 69–89 (MQLI…SHLI).

It belongs to the CPA3 antiporters (TC 2.A.63) subunit G family. As to quaternary structure, may form a heterooligomeric complex that consists of seven subunits: mnhA1, mnhB1, mnhC1, mnhD1, mnhE1, mnhF1 and mnhG1.

It is found in the cell membrane. Mnh complex is a Na(+)/H(+) antiporter involved in Na(+) excretion. The protein is Na(+)/H(+) antiporter subunit G1 (mnhG1) of Staphylococcus epidermidis (strain ATCC 35984 / DSM 28319 / BCRC 17069 / CCUG 31568 / BM 3577 / RP62A).